Reading from the N-terminus, the 394-residue chain is Flagellin A (394 aa).

Belongs to the bacterial flagellin family.

It localises to the secreted. The protein resides in the bacterial flagellum. Its function is as follows. Flagellin is the subunit protein which polymerizes to form the filaments of bacterial flagella. Homomer of FlaA is able to form a functional filament. In Rhizobium meliloti (strain 1021) (Ensifer meliloti), this protein is Flagellin A (flaA).